The sequence spans 152 residues: Xanthine-guanine phosphoribosyltransferase (152 aa).

Residues 37–38 and 88–96 each bind 5-phospho-alpha-D-ribose 1-diphosphate; these read RG and DDLVDTGGT. D89 lines the Mg(2+) pocket. The guanine site is built by D92 and I135. Residues D92 and I135 each coordinate xanthine. Residues 92–96 and 134–135 each bind GMP; these read DTGGT and WI.

The protein belongs to the purine/pyrimidine phosphoribosyltransferase family. XGPT subfamily. As to quaternary structure, homotetramer. It depends on Mg(2+) as a cofactor.

The protein localises to the cell inner membrane. It catalyses the reaction GMP + diphosphate = guanine + 5-phospho-alpha-D-ribose 1-diphosphate. It carries out the reaction XMP + diphosphate = xanthine + 5-phospho-alpha-D-ribose 1-diphosphate. The enzyme catalyses IMP + diphosphate = hypoxanthine + 5-phospho-alpha-D-ribose 1-diphosphate. It participates in purine metabolism; GMP biosynthesis via salvage pathway; GMP from guanine: step 1/1. It functions in the pathway purine metabolism; XMP biosynthesis via salvage pathway; XMP from xanthine: step 1/1. In terms of biological role, purine salvage pathway enzyme that catalyzes the transfer of the ribosyl-5-phosphate group from 5-phospho-alpha-D-ribose 1-diphosphate (PRPP) to the N9 position of the 6-oxopurines guanine and xanthine to form the corresponding ribonucleotides GMP (guanosine 5'-monophosphate) and XMP (xanthosine 5'-monophosphate), with the release of PPi. To a lesser extent, also acts on hypoxanthine. In Yersinia enterocolitica serotype O:8 / biotype 1B (strain NCTC 13174 / 8081), this protein is Xanthine-guanine phosphoribosyltransferase.